A 295-amino-acid polypeptide reads, in one-letter code: Beta-lactamase-like protein 2 homolog (295 aa).

H79, H81, D83, H84, H141, D160, and H195 together coordinate Zn(2+).

The protein belongs to the metallo-beta-lactamase superfamily. Glyoxalase II family.

The polypeptide is Beta-lactamase-like protein 2 homolog (Caenorhabditis elegans).